The chain runs to 141 residues: Hemoglobin subunit alpha-D (141 aa).

Positions 1–141 (MLTADDKKLL…VAAVLAEKYR (141 aa)) constitute a Globin domain. Positions 58 and 87 each coordinate heme b.

It belongs to the globin family. Heterotetramer of two alpha-D chains and two beta chains. Red blood cells.

Its function is as follows. Involved in oxygen transport from the lung to the various peripheral tissues. In Anser anser anser (Western greylag goose), this protein is Hemoglobin subunit alpha-D (HBAD).